A 299-amino-acid polypeptide reads, in one-letter code: Nucleotide-binding protein SAV_6292 (299 aa).

23 to 30 (GMSGAGRS) contributes to the ATP binding site. Residue 74–77 (DVRG) coordinates GTP.

It belongs to the RapZ-like family.

In terms of biological role, displays ATPase and GTPase activities. In Streptomyces avermitilis (strain ATCC 31267 / DSM 46492 / JCM 5070 / NBRC 14893 / NCIMB 12804 / NRRL 8165 / MA-4680), this protein is Nucleotide-binding protein SAV_6292.